We begin with the raw amino-acid sequence, 763 residues long: Phosphoglycerol transferase I (763 aa).

The next 4 helical transmembrane spans lie at 1 to 21 (MSEL…AWKA), 26 to 46 (WWFA…ITLF), 77 to 97 (ILPG…LGWI), and 108 to 128 (FGYS…SPAF).

Belongs to the OpgB family.

The protein localises to the cell inner membrane. The enzyme catalyses a phosphatidylglycerol + a membrane-derived-oligosaccharide D-glucose = a 1,2-diacyl-sn-glycerol + a membrane-derived-oligosaccharide 6-(glycerophospho)-D-glucose.. It functions in the pathway glycan metabolism; osmoregulated periplasmic glucan (OPG) biosynthesis. Transfers a phosphoglycerol residue from phosphatidylglycerol to the membrane-bound nascent glucan backbones. The sequence is that of Phosphoglycerol transferase I from Escherichia coli (strain SMS-3-5 / SECEC).